Consider the following 269-residue polypeptide: 4-hydroxy-tetrahydrodipicolinate reductase (269 aa).

11 to 16 (GPIGRM) is an NAD(+) binding site. NADP(+) is bound at residue lysine 39. NAD(+)-binding positions include 101-103 (GTT) and 125-128 (ASNF). The Proton donor/acceptor role is filled by histidine 158. Histidine 159 is a binding site for (S)-2,3,4,5-tetrahydrodipicolinate. Lysine 162 serves as the catalytic Proton donor. 168–169 (GT) provides a ligand contact to (S)-2,3,4,5-tetrahydrodipicolinate.

This sequence belongs to the DapB family. In terms of assembly, homotetramer.

It localises to the cytoplasm. It carries out the reaction (S)-2,3,4,5-tetrahydrodipicolinate + NAD(+) + H2O = (2S,4S)-4-hydroxy-2,3,4,5-tetrahydrodipicolinate + NADH + H(+). It catalyses the reaction (S)-2,3,4,5-tetrahydrodipicolinate + NADP(+) + H2O = (2S,4S)-4-hydroxy-2,3,4,5-tetrahydrodipicolinate + NADPH + H(+). It participates in amino-acid biosynthesis; L-lysine biosynthesis via DAP pathway; (S)-tetrahydrodipicolinate from L-aspartate: step 4/4. Functionally, catalyzes the conversion of 4-hydroxy-tetrahydrodipicolinate (HTPA) to tetrahydrodipicolinate. The polypeptide is 4-hydroxy-tetrahydrodipicolinate reductase (Buchnera aphidicola subsp. Acyrthosiphon pisum (strain APS) (Acyrthosiphon pisum symbiotic bacterium)).